Here is a 273-residue protein sequence, read N- to C-terminus: 4-hydroxy-tetrahydrodipicolinate reductase (273 aa).

NAD(+) is bound by residues 11-16 and Glu-36; that span reads GAGGRM. Arg-37 contributes to the NADP(+) binding site. NAD(+)-binding positions include 100–102 and 124–127; these read GTT and AANY. His-157 functions as the Proton donor/acceptor in the catalytic mechanism. (S)-2,3,4,5-tetrahydrodipicolinate is bound at residue His-158. Lys-161 acts as the Proton donor in catalysis. 167–168 contributes to the (S)-2,3,4,5-tetrahydrodipicolinate binding site; that stretch reads GT.

It belongs to the DapB family.

The protein localises to the cytoplasm. It carries out the reaction (S)-2,3,4,5-tetrahydrodipicolinate + NAD(+) + H2O = (2S,4S)-4-hydroxy-2,3,4,5-tetrahydrodipicolinate + NADH + H(+). It catalyses the reaction (S)-2,3,4,5-tetrahydrodipicolinate + NADP(+) + H2O = (2S,4S)-4-hydroxy-2,3,4,5-tetrahydrodipicolinate + NADPH + H(+). It participates in amino-acid biosynthesis; L-lysine biosynthesis via DAP pathway; (S)-tetrahydrodipicolinate from L-aspartate: step 4/4. Catalyzes the conversion of 4-hydroxy-tetrahydrodipicolinate (HTPA) to tetrahydrodipicolinate. The chain is 4-hydroxy-tetrahydrodipicolinate reductase from Acinetobacter baylyi (strain ATCC 33305 / BD413 / ADP1).